The sequence spans 321 residues: Glucokinase (321 aa).

8–13 (GDVGGT) contacts ATP.

Belongs to the bacterial glucokinase family.

The protein resides in the cytoplasm. The enzyme catalyses D-glucose + ATP = D-glucose 6-phosphate + ADP + H(+). In Enterobacter sp. (strain 638), this protein is Glucokinase.